Here is a 335-residue protein sequence, read N- to C-terminus: DDRGK domain-containing protein 1 (335 aa).

Topologically, residues 1–6 are lumenal; that stretch reads MGDTYS. A helical membrane pass occupies residues 7 to 27; that stretch reads LVLVAGYLSIFLFIGAIGYFY. At 28-335 the chain is on the cytoplasmic side; it reads LSKPRIPSSN…NNDQDPVDTN (308 aa). A disordered region spans residues 37-124; sequence NVNEQQQQQQ…GEDIGVVAPG (88 aa). 2 stretches are compositionally biased toward low complexity: residues 41-56 and 91-103; these read QQQQ…QQPQ and SSGS…TNSD. A compositionally biased stretch (acidic residues) spans 104-117; that stretch reads NYDDDNGQEGEGED.

The protein belongs to the DDRGK1 family.

The protein resides in the endoplasmic reticulum membrane. In terms of biological role, substrate adapter for ufmylation, the covalent attachment of the ubiquitin-like modifier UFM1 to substrate proteins. This is DDRGK domain-containing protein 1 from Dictyostelium discoideum (Social amoeba).